The following is a 393-amino-acid chain: G protein-activated inward rectifier potassium channel 3 (393 aa).

The interval 1-23 (MAQENAAFSPGSEEPPRRRGRQR) is disordered. Over 1–57 (MAQENAAFSPGSEEPPRRRGRQRYVEKDGRCNVQQGNVRETYRYLTDLFTTLVDLQW) the chain is Cytoplasmic. Residues 58-82 (RLSLLFFVLAYALTWLFFGAIWWLI) form a helical membrane-spanning segment. The Extracellular portion of the chain corresponds to 83–106 (AYGRGDLEHLEDTAWTPCVNNLNG). Positions 107–118 (FVAAFLFSIETE) form an intramembrane region, helical; Pore-forming. The pore-forming intramembrane region spans 119–125 (TTIGYGH). The short motif at 120–125 (TIGYGH) is the Selectivity filter element. At 126-134 (RVITDQCPE) the chain is on the extracellular side. Residues 135–156 (GIVLLLLQAILGSMVNAFMVGC) form a helical membrane-spanning segment. The Cytoplasmic segment spans residues 157–393 (MFVKISQPNK…LPPPESESKV (237 aa)). The interval 360 to 393 (KVEEEGAGEGAGAGDGADKEHNGCLPPPESESKV) is disordered. Residues 384–393 (LPPPESESKV) show a composition bias toward pro residues. The short motif at 390–393 (ESKV) is the PDZ-binding element.

The protein belongs to the inward rectifier-type potassium channel (TC 1.A.2.1) family. KCNJ9 subfamily. As to quaternary structure, associates with KCNJ3/GIRK1 to form a G-protein-activated heteromultimer pore-forming unit. Interacts (via PDZ-binding motif) with SNX27 (via PDZ domain); the interaction is required when endocytosed to prevent degradation in lysosomes and promote recycling to the plasma membrane. As to expression, expressed mainly in the brain, some expression in the skeletal muscle.

It is found in the membrane. It carries out the reaction K(+)(in) = K(+)(out). Functionally, inward rectifier potassium channels are characterized by a greater tendency to allow potassium to flow into the cell rather than out of it. Their voltage dependence is regulated by the concentration of extracellular potassium; as external potassium is raised, the voltage range of the channel opening shifts to more positive voltages. The inward rectification is mainly due to the blockage of outward current by internal magnesium. This receptor is controlled by G proteins. Unable to produce channel activity when expressed alone. Forms a functional channel in association with KCNJ3/GIRK1. The sequence is that of G protein-activated inward rectifier potassium channel 3 (Kcnj9) from Mus musculus (Mouse).